Reading from the N-terminus, the 269-residue chain is Integral membrane protein 2C (269 aa).

Thr-39 bears the Phosphothreonine mark. Residues 57–77 (VGGVCYLSMGMVVLLMGLVFA) traverse the membrane as a helical; Signal-anchor for type II membrane protein segment. Positions 138-232 (FGGGDPADII…LCNGKDTYRL (95 aa)) constitute a BRICHOS domain. A disulfide bond links Cys-165 and Cys-224. The N-linked (GlcNAc...) asparagine glycan is linked to Asn-171.

This sequence belongs to the ITM2 family. Interacts with BACE1. Interacts with APP. Interacts with STMN2. Post-translationally, type I membrane-bound, as well as soluble, furin has a pre-eminent role in ITM2C proteolytic processing. PCSK7 and PCSK5 may also be involved although to a lesser extent. The soluble form of PCSK7 is incapable of processing ITM2C. Fails to undergo shedding by ADAM10 and intramembrane cleavage by SPPL2B.

Its subcellular location is the lysosome membrane. It is found in the cell membrane. Negative regulator of amyloid-beta peptide production. May inhibit the processing of APP by blocking its access to alpha- and beta-secretase. Binding to the beta-secretase-cleaved APP C-terminal fragment is negligible, suggesting that ITM2C is a poor gamma-secretase cleavage inhibitor. May play a role in TNF-induced cell death and neuronal differentiation. In Mus musculus (Mouse), this protein is Integral membrane protein 2C (Itm2c).